The primary structure comprises 131 residues: Glycine cleavage system H protein (131 aa).

One can recognise a Lipoyl-binding domain in the interval 24–106 (TVTIGITDHA…YEDGWIIKLK (83 aa)). Lysine 65 is modified (N6-lipoyllysine).

This sequence belongs to the GcvH family. In terms of assembly, the glycine cleavage system is composed of four proteins: P, T, L and H. The cofactor is (R)-lipoate.

Functionally, the glycine cleavage system catalyzes the degradation of glycine. The H protein shuttles the methylamine group of glycine from the P protein to the T protein. In Chromohalobacter salexigens (strain ATCC BAA-138 / DSM 3043 / CIP 106854 / NCIMB 13768 / 1H11), this protein is Glycine cleavage system H protein.